A 312-amino-acid chain; its full sequence is Olfactory receptor 2J1 (312 aa).

The Extracellular portion of the chain corresponds to 1–26 (MLMKKNASFEDFFLLLGFSNWPHLEV). N-linked (GlcNAc...) asparagine glycosylation occurs at Asn6. A helical membrane pass occupies residues 27–50 (VLFVVILIFYLITLIGNLFIIILS). The Cytoplasmic segment spans residues 51–58 (YLDSHLHT). The chain crosses the membrane as a helical span at residues 59–80 (PMYFFLSNLSFLDLCYTTSSIP). The Extracellular portion of the chain corresponds to 81–101 (QLLVNLWGPEKTISYAGCTVQ). Cysteines 98 and 190 form a disulfide. Residues 102–121 (LYFVLALGTAECVLLVVMSY) form a helical membrane-spanning segment. At 122–140 (DRYAAVCRPLHYTVLMHPR) the chain is on the cytoplasmic side. The helical transmembrane segment at 141–159 (FCRLLAAASWVSGFTTSAL) threads the bilayer. The Extracellular portion of the chain corresponds to 160–196 (HSSFTFWIPLCRHRLVDHFFCEVPALLRLSCVDTQAN). Residues 197-220 (ELTLMVMSSIFVLIPLILILTSYG) form a helical membrane-spanning segment. Residues 221–237 (AIARAVLSMQSTTGLQK) lie on the Cytoplasmic side of the membrane. A helical membrane pass occupies residues 238-260 (VLRTCGAHLMVVSLFFIPVMCMY). The Extracellular segment spans residues 261–273 (LQPPSENSQDQGK). The chain crosses the membrane as a helical span at residues 274–293 (FIALFYTVVTPSLNPLIYTF). Topologically, residues 294–312 (RNKDVRGAVKRLMGWEWGM) are cytoplasmic.

The protein belongs to the G-protein coupled receptor 1 family.

Its subcellular location is the cell membrane. Functionally, odorant receptor. The protein is Olfactory receptor 2J1 (OR2J1) of Homo sapiens (Human).